The primary structure comprises 339 residues: tRNA pseudouridine synthase D (339 aa).

D80 functions as the Nucleophile in the catalytic mechanism. The 157-residue stretch at G155–P311 folds into the TRUD domain.

It belongs to the pseudouridine synthase TruD family.

It carries out the reaction uridine(13) in tRNA = pseudouridine(13) in tRNA. Its function is as follows. Responsible for synthesis of pseudouridine from uracil-13 in transfer RNAs. The polypeptide is tRNA pseudouridine synthase D (Haemophilus influenzae (strain 86-028NP)).